The chain runs to 286 residues: ATP synthase gamma chain (286 aa).

The protein belongs to the ATPase gamma chain family. F-type ATPases have 2 components, CF(1) - the catalytic core - and CF(0) - the membrane proton channel. CF(1) has five subunits: alpha(3), beta(3), gamma(1), delta(1), epsilon(1). CF(0) has three main subunits: a, b and c.

It is found in the cell membrane. Functionally, produces ATP from ADP in the presence of a proton gradient across the membrane. The gamma chain is believed to be important in regulating ATPase activity and the flow of protons through the CF(0) complex. In Oceanobacillus iheyensis (strain DSM 14371 / CIP 107618 / JCM 11309 / KCTC 3954 / HTE831), this protein is ATP synthase gamma chain.